Reading from the N-terminus, the 354-residue chain is Holliday junction branch migration complex subunit RuvB (354 aa).

Residues 1-22 (MTIQTDDFAPAPPRVVSAAPAS) form a disordered region. Residues 5 to 193 (TDDFAPAPPR…FGIVARLEFY (189 aa)) form a large ATPase domain (RuvB-L) region. ATP-binding positions include Leu32, Arg33, Gly74, Lys77, Thr78, Thr79, 140–142 (EDY), Arg183, Tyr193, and Arg230. Position 78 (Thr78) interacts with Mg(2+). Residues 194–264 (TPEELALIVR…IAHKALVMLD (71 aa)) form a small ATPAse domain (RuvB-S) region. The segment at 267–354 (PQGFDLMDRK…RSDGQDLFGI (88 aa)) is head domain (RuvB-H). Residues Arg303, Arg322, and Arg327 each coordinate DNA.

It belongs to the RuvB family. Homohexamer. Forms an RuvA(8)-RuvB(12)-Holliday junction (HJ) complex. HJ DNA is sandwiched between 2 RuvA tetramers; dsDNA enters through RuvA and exits via RuvB. An RuvB hexamer assembles on each DNA strand where it exits the tetramer. Each RuvB hexamer is contacted by two RuvA subunits (via domain III) on 2 adjacent RuvB subunits; this complex drives branch migration. In the full resolvosome a probable DNA-RuvA(4)-RuvB(12)-RuvC(2) complex forms which resolves the HJ.

Its subcellular location is the cytoplasm. It catalyses the reaction ATP + H2O = ADP + phosphate + H(+). In terms of biological role, the RuvA-RuvB-RuvC complex processes Holliday junction (HJ) DNA during genetic recombination and DNA repair, while the RuvA-RuvB complex plays an important role in the rescue of blocked DNA replication forks via replication fork reversal (RFR). RuvA specifically binds to HJ cruciform DNA, conferring on it an open structure. The RuvB hexamer acts as an ATP-dependent pump, pulling dsDNA into and through the RuvAB complex. RuvB forms 2 homohexamers on either side of HJ DNA bound by 1 or 2 RuvA tetramers; 4 subunits per hexamer contact DNA at a time. Coordinated motions by a converter formed by DNA-disengaged RuvB subunits stimulates ATP hydrolysis and nucleotide exchange. Immobilization of the converter enables RuvB to convert the ATP-contained energy into a lever motion, pulling 2 nucleotides of DNA out of the RuvA tetramer per ATP hydrolyzed, thus driving DNA branch migration. The RuvB motors rotate together with the DNA substrate, which together with the progressing nucleotide cycle form the mechanistic basis for DNA recombination by continuous HJ branch migration. Branch migration allows RuvC to scan DNA until it finds its consensus sequence, where it cleaves and resolves cruciform DNA. This is Holliday junction branch migration complex subunit RuvB from Variovorax paradoxus (strain S110).